The chain runs to 143 residues: Crossover junction endodeoxyribonuclease Hjc (143 aa).

Glutamate 12 contacts Mg(2+). The active site involves serine 32. Residues aspartate 42 and glutamate 55 each coordinate Mg(2+).

It belongs to the Holliday junction resolvase Hjc family. As to quaternary structure, homodimer. Interacts with PCNA subunit PCNA1. The cofactor is Mg(2+).

The enzyme catalyses Endonucleolytic cleavage at a junction such as a reciprocal single-stranded crossover between two homologous DNA duplexes (Holliday junction).. With respect to regulation, autoinhibits at very high concentrations, possibly because of extreme junction distortion. Inhibition (and activity at low concentrations of enzyme) is stimulated by dsDNA and Sso7d. Activity stimulated by PCNA subunit PCNA1. Its function is as follows. A structure-specific endonuclease that resolves Holliday junction (HJ) intermediates during genetic recombination; may have some degree of sequence preference in a mobile junction. Cleaves 4-way DNA junctions introducing paired nicks in opposing strands, leaving a 5'-terminal phosphate and a 3'-terminal hydroxyl group that are subsequently ligated to produce recombinant products. Can cleave all 4 strands 3 bases 3' of the junction center. Cleaves both mobile and immobile junctions. Modifies the structure of the 4-way DNA junction, a model Holliday junction structure. The protein forms multiple complexes with 4-way DNA, suggesting more than 1 homodimer can bind to each junction. In Saccharolobus solfataricus (strain ATCC 35092 / DSM 1617 / JCM 11322 / P2) (Sulfolobus solfataricus), this protein is Crossover junction endodeoxyribonuclease Hjc.